We begin with the raw amino-acid sequence, 1117 residues long: Telomerase reverse transcriptase (1117 aa).

A TEN region spans residues 1 to 191 (MQKINNINNN…VKQKKWYKNN (191 aa)). The tract at residues 217-519 (NQYIYPEIQR…ENLEKVEEKL (303 aa)) is RBD. Positions 517–881 (EKLIPEDSFQ…NECQWIGKSI (365 aa)) constitute a Reverse transcriptase domain. The RT stretch occupies residues 520–887 (IPEDSFQKYP…GKSIDMNTLE (368 aa)). Asp618 is a Mg(2+) binding site. The TRAP stretch occupies residues 638-742 (SDLIQDTYFI…NQDKPRCITK (105 aa)). Positions 815 and 816 each coordinate Mg(2+). A CTE region spans residues 888 to 1117 (IKSIQKQTQQ…SAKSNQQNTN (230 aa)).

It belongs to the reverse transcriptase family. Telomerase subfamily. Component of the telomerase holoenzyme complex, composed of the catalytic core (the catalytic subunit TERT, the telomerase RNA template component TER and TAP65/p65), which is associated with two heterotrimeric subcomplexes: (i) the replication protein A (RPA)-related subcomplex, composed of TEB1, RPA2/TEB2 and RPA3/TEB3 and (ii) the CST-like subcomplex, composed of TAP75/p75, TAP45/p45 and TAP19/p19. TEB1 and the CST-like subcomplex are tethered to the catalytic core by TAP50/p50.

It is found in the nucleus. It localises to the chromosome. The protein resides in the telomere. The catalysed reaction is DNA(n) + a 2'-deoxyribonucleoside 5'-triphosphate = DNA(n+1) + diphosphate. In terms of biological role, catalytic component of telomerase, an essential ribonucleoprotein enzyme that copies new telomeric repeats onto chromosome ends by repetitively synthesizing the short telomere-repeat sequence 5'-TTGGGG-3' using an RNA template component TER. TERT is a reverse transcriptase that adds simple sequence repeats to chromosome ends by copying a template sequence within the RNA component of the enzyme. The polypeptide is Telomerase reverse transcriptase (Tetrahymena thermophila (strain SB210)).